Reading from the N-terminus, the 118-residue chain is UPF0295 protein BA_0538/GBAA_0538/BAS0506 (118 aa).

Transmembrane regions (helical) follow at residues 12-32 (IRTFALSLVFIGLFIAYLGVF) and 43-63 (FMMVGFLAVIASTVVYFWIGM).

Belongs to the UPF0295 family.

The protein resides in the cell membrane. In Bacillus anthracis, this protein is UPF0295 protein BA_0538/GBAA_0538/BAS0506.